Here is a 71-residue protein sequence, read N- to C-terminus: DNA-directed RNA polymerase subunit 10-like protein (71 aa).

Cys7, Cys10, Cys44, and Cys45 together coordinate Zn(2+).

It belongs to the archaeal Rpo10/eukaryotic RPB10 RNA polymerase subunit family. In terms of assembly, interacts with IYO.

It localises to the nucleus. This Arabidopsis thaliana (Mouse-ear cress) protein is DNA-directed RNA polymerase subunit 10-like protein.